A 95-amino-acid polypeptide reads, in one-letter code: Glutamyl-tRNA(Gln) amidotransferase subunit C (95 aa).

It belongs to the GatC family. Heterotrimer of A, B and C subunits.

It carries out the reaction L-glutamyl-tRNA(Gln) + L-glutamine + ATP + H2O = L-glutaminyl-tRNA(Gln) + L-glutamate + ADP + phosphate + H(+). It catalyses the reaction L-aspartyl-tRNA(Asn) + L-glutamine + ATP + H2O = L-asparaginyl-tRNA(Asn) + L-glutamate + ADP + phosphate + 2 H(+). Allows the formation of correctly charged Asn-tRNA(Asn) or Gln-tRNA(Gln) through the transamidation of misacylated Asp-tRNA(Asn) or Glu-tRNA(Gln) in organisms which lack either or both of asparaginyl-tRNA or glutaminyl-tRNA synthetases. The reaction takes place in the presence of glutamine and ATP through an activated phospho-Asp-tRNA(Asn) or phospho-Glu-tRNA(Gln). The polypeptide is Glutamyl-tRNA(Gln) amidotransferase subunit C (Moraxella catarrhalis (Branhamella catarrhalis)).